Consider the following 357-residue polypeptide: Malonyl CoA reductase (NADP) (357 aa).

13–16 (TGLV) serves as a coordination point for NADP(+). Cys-150 acts as the Acyl-thioester intermediate in catalysis. Position 180 to 181 (180 to 181 (SG)) interacts with NADP(+). The active-site Proton acceptor is the His-245. NADP(+) is bound at residue 332–333 (NT).

Belongs to the aspartate-semialdehyde dehydrogenase family. Homotetramer.

The enzyme catalyses 3-oxopropanoate + NADP(+) + CoA = malonyl-CoA + NADPH + H(+). In terms of biological role, catalyzes the reduction of malonyl-CoA to malonate semialdehyde, a key step in the 3-hydroxypropanoate and the 3-hydroxypropanoate/4-hydroxybutyrate cycles. The protein is Malonyl CoA reductase (NADP) of Metallosphaera sedula (strain ATCC 51363 / DSM 5348 / JCM 9185 / NBRC 15509 / TH2).